Reading from the N-terminus, the 400-residue chain is Enoyl-[acyl-carrier-protein] reductase [NADH] (400 aa).

NAD(+)-binding positions include 48 to 53, 74 to 75, 111 to 112, and 139 to 140; these read GSSSGY, FE, DA, and LA. Tyr-225 provides a ligand contact to substrate. Tyr-235 functions as the Proton donor in the catalytic mechanism. NAD(+) contacts are provided by residues Lys-244 and 273–275; that span reads VVT.

The protein belongs to the TER reductase family. Monomer.

It carries out the reaction a 2,3-saturated acyl-[ACP] + NAD(+) = a (2E)-enoyl-[ACP] + NADH + H(+). The protein operates within lipid metabolism; fatty acid biosynthesis. Involved in the final reduction of the elongation cycle of fatty acid synthesis (FAS II). Catalyzes the reduction of a carbon-carbon double bond in an enoyl moiety that is covalently linked to an acyl carrier protein (ACP). The chain is Enoyl-[acyl-carrier-protein] reductase [NADH] from Shewanella frigidimarina (strain NCIMB 400).